A 180-amino-acid chain; its full sequence is High mobility group protein B1 (180 aa).

The short motif at valine 1 to lysine 8 is the Nuclear localization signal (NLS) 1 element. Residues valine 1 to isoleucine 44 constitute a DNA-binding region (HMG box 1). Lysine 8 is modified (N6-acetyllysine). Isoglutamyl lysine isopeptide (Lys-Gln) (interchain with Q-?) cross-links involve residues lysine 8 and lysine 9. The residue at position 10 (cysteine 10) is a Cysteine sulfonic acid (-SO3H). Residue lysine 33 forms an Isoglutamyl lysine isopeptide (Lys-Gln) (interchain with Q-?) linkage. The segment at proline 45–lysine 61 is LPS binding (Lipid A). Residues phenylalanine 54–glutamate 73 are cytokine-stimulating activity. Lysine 55 is modified (N6-acetyllysine). The HMG box 2 DNA-binding region spans proline 60–arginine 128. Phosphoserine is present on serine 65. Residue cysteine 71 is modified to Cysteine sulfonic acid (-SO3H). 7 positions are modified to N6-acetyllysine: lysine 92, lysine 93, lysine 106, lysine 137, lysine 138, lysine 142, and lysine 145. The interval lysine 115 to lysine 148 is binding to AGER/RAGE. Residues alanine 126–glutamate 144 are compositionally biased toward basic and acidic residues. Residues alanine 126 to glutamate 180 are disordered. The Nuclear localization signal (NLS) 2 signature appears at alanine 143–lysine 149. Positions alanine 143 to lysine 149 are NLS 2. Lysine 145 participates in a covalent cross-link: Isoglutamyl lysine isopeptide (Lys-Gln) (interchain with Q-?). Serine 146 carries the ADP-ribosylserine modification. Residues lysine 147, lysine 148, lysine 149, and lysine 150 each carry the N6-acetyllysine modification. Isoglutamyl lysine isopeptide (Lys-Gln) (interchain with Q-?) cross-links involve residues lysine 147, lysine 148, and lysine 149. The span at glutamate 152–glutamate 180 shows a compositional bias: acidic residues.

Belongs to the HMGB family. In terms of assembly, interacts (fully reduced HMGB1) with CXCL12; probably in a 1:2 ratio involving two molecules of CXCL12, each interacting with one HMG box of HMGB1; inhibited by glycyrrhizin. Associates with the TLR4:LY96 receptor complex. Component of the RAG complex composed of core components RAG1 and RAG2, and associated component HMGB1 or HMGB2. Interacts (in cytoplasm upon starvation) with BECN1; inhibits the interaction of BECN1 and BCL2 leading to promotion of autophagy. Interacts with KPNA1; involved in nuclear import. Interacts with SREBF1, TLR2, TLR4, TLR9, PTPRZ1, APEX1, FEN1, POLB, TERT. Interacts with IL1B, AGER, MSH2, XPA, XPC, HNF1A, TP53. Interacts with CD24; the probable CD24:SIGLEC10 complex is proposed to inhibit HGMB1-mediated tissue damage immune response. Interacts with THBD; prevents HGMB1 interaction with ACER/RAGE and inhibits HGMB1 pro-inflammatory activity. Interacts with HAVCR2; impairs HMGB1 binding to B-DNA and likely HMGB1-mediated innate immune response. Interacts with XPO1; mediating nuclear export. Interacts with receptor RAGE/AGER. Phosphorylated at serine residues. Phosphorylation in both NLS regions is required for cytoplasmic translocation followed by secretion. Post-translationally, acetylated on multiple sites upon stimulation with LPS. Acetylation on lysine residues in the nuclear localization signals (NLS 1 and NLS 2) leads to cytoplasmic localization and subsequent secretion. In terms of processing, reduction/oxidation of cysteine residues and a possible intramolecular disulfide bond give rise to different redox forms with specific functional activities in various cellular compartments: 1- fully reduced HMGB1 (HMGB1C23hC45hC106h), 2-disulfide HMGB1 (HMGB1C23-C45C106h) and 3- sulfonyl HMGB1 (HMGB1C23soC45soC106so). Poly-ADP-ribosylated by PARP1 when secreted following stimulation with LPS. Post-translationally, in vitro cleavage by CASP1 is liberating a HMG box 1-containing peptide which may mediate immunogenic activity; the peptide antagonizes apoptosis-induced immune tolerance. Can be proteolytically cleaved by a thrombin:thrombomodulin complex; reduces binding to heparin and pro-inflammatory activities. In terms of processing, forms covalent cross-links mediated by transglutaminase TGM2, between a glutamine and the epsilon-amino group of a lysine residue, forming homopolymers and heteropolymers.

The protein localises to the nucleus. It is found in the chromosome. The protein resides in the cytoplasm. Its subcellular location is the secreted. It localises to the cell membrane. The protein localises to the endosome. It is found in the endoplasmic reticulum-Golgi intermediate compartment. Multifunctional redox sensitive protein with various roles in different cellular compartments. In the nucleus is one of the major chromatin-associated non-histone proteins and acts as a DNA chaperone involved in replication, transcription, chromatin remodeling, V(D)J recombination, DNA repair and genome stability. Proposed to be an universal biosensor for nucleic acids. Promotes host inflammatory response to sterile and infectious signals and is involved in the coordination and integration of innate and adaptive immune responses. In the cytoplasm functions as a sensor and/or chaperone for immunogenic nucleic acids implicating the activation of TLR9-mediated immune responses, and mediates autophagy. Acts as a danger-associated molecular pattern (DAMP) molecule that amplifies immune responses during tissue injury. Released to the extracellular environment can bind DNA, nucleosomes, IL-1 beta, CXCL12, AGER isoform 2/sRAGE, lipopolysaccharide (LPS) and lipoteichoic acid (LTA), and activates cells through engagement of multiple surface receptors. In the extracellular compartment fully reduced HMGB1 (released by necrosis) acts as a chemokine, disulfide HMGB1 (actively secreted) as a cytokine, and sulfonyl HMGB1 (released from apoptotic cells) promotes immunological tolerance. Has proangiogenic activity. May be involved in platelet activation. Binds to phosphatidylserine and phosphatidylethanolamide. Bound to RAGE mediates signaling for neuronal outgrowth. May play a role in accumulation of expanded polyglutamine (polyQ) proteins. Its function is as follows. Nuclear functions are attributed to fully reduced HGMB1. Associates with chromatin and binds DNA with a preference to non-canonical DNA structures such as single-stranded DNA, DNA-containing cruciforms or bent structures, supercoiled DNA and ZDNA. Can bent DNA and enhance DNA flexibility by looping thus providing a mechanism to promote activities on various gene promoters by enhancing transcription factor binding and/or bringing distant regulatory sequences into close proximity. May be involved in nucleotide excision repair (NER), mismatch repair (MMR) and base excision repair (BER) pathways, and double strand break repair such as non-homologous end joining (NHEJ). Involved in V(D)J recombination by acting as a cofactor of the RAG complex: acts by stimulating cleavage and RAG protein binding at the 23 bp spacer of conserved recombination signal sequences (RSS). In vitro can displace histone H1 from highly bent DNA. Can restructure the canonical nucleosome leading to relaxation of structural constraints for transcription factor-binding. Enhances binding of sterol regulatory element-binding proteins (SREBPs) such as SREBF1 to their cognate DNA sequences and increases their transcriptional activities. Facilitates binding of TP53 to DNA. May be involved in mitochondrial quality control and autophagy in a transcription-dependent fashion implicating HSPB1. Can modulate the activity of the telomerase complex and may be involved in telomere maintenance. In terms of biological role, in the cytoplasm proposed to dissociate the BECN1:BCL2 complex via competitive interaction with BECN1 leading to autophagy activation. Can protect BECN1 and ATG5 from calpain-mediated cleavage and thus proposed to control their proautophagic and proapoptotic functions and to regulate the extent and severity of inflammation-associated cellular injury. In myeloid cells has a protective role against endotoxemia and bacterial infection by promoting autophagy. Involved in endosomal translocation and activation of TLR9 in response to CpG-DNA in macrophages. Functionally, in the extracellular compartment (following either active secretion or passive release) involved in regulation of the inflammatory response. Fully reduced HGMB1 (which subsequently gets oxidized after release) in association with CXCL12 mediates the recruitment of inflammatory cells during the initial phase of tissue injury; the CXCL12:HMGB1 complex triggers CXCR4 homodimerization. Induces the migration of monocyte-derived immature dendritic cells and seems to regulate adhesive and migratory functions of neutrophils implicating AGER/RAGE and ITGAM. Can bind to various types of DNA and RNA including microbial unmethylated CpG-DNA to enhance the innate immune response to nucleic acids. Proposed to act in promiscuous DNA/RNA sensing which cooperates with subsequent discriminative sensing by specific pattern recognition receptors. Promotes extracellular DNA-induced AIM2 inflammasome activation implicating AGER/RAGE. Disulfide HMGB1 binds to transmembrane receptors, such as AGER/RAGE, TLR2, TLR4 and probably TREM1, thus activating their signal transduction pathways. Mediates the release of cytokines/chemokines such as TNF, IL-1, IL-6, IL-8, CCL2, CCL3, CCL4 and CXCL10. Promotes secretion of interferon-gamma by macrophage-stimulated natural killer (NK) cells in concert with other cytokines like IL-2 or IL-12. TLR4 is proposed to be the primary receptor promoting macrophage activation and signaling through TLR4 seems to implicate LY96/MD-2. In bacterial LPS- or LTA-mediated inflammatory responses binds to the endotoxins and transfers them to CD14 for signaling to the respective TLR4:LY96 and TLR2 complexes. Contributes to tumor proliferation by association with ACER/RAGE. Can bind to IL1-beta and signals through the IL1R1:IL1RAP receptor complex. Binding to class A CpG activates cytokine production in plasmacytoid dendritic cells implicating TLR9, MYD88 and AGER/RAGE and can activate autoreactive B cells. Via HMGB1-containing chromatin immune complexes may also promote B cell responses to endogenous TLR9 ligands through a B-cell receptor (BCR)-dependent and ACER/RAGE-independent mechanism. Inhibits phagocytosis of apoptotic cells by macrophages; the function is dependent on poly-ADP-ribosylation and involves binding to phosphatidylserine on the cell surface of apoptotic cells. In adaptive immunity may be involved in enhancing immunity through activation of effector T-cells and suppression of regulatory T (TReg) cells. In contrast, without implicating effector or regulatory T-cells, required for tumor infiltration and activation of T-cells expressing the lymphotoxin LTA:LTB heterotrimer thus promoting tumor malignant progression. Also reported to limit proliferation of T-cells. Released HMGB1:nucleosome complexes formed during apoptosis can signal through TLR2 to induce cytokine production. Involved in induction of immunological tolerance by apoptotic cells; its pro-inflammatory activities when released by apoptotic cells are neutralized by reactive oxygen species (ROS)-dependent oxidation specifically on Cys-106. During macrophage activation by activated lymphocyte-derived self apoptotic DNA (ALD-DNA) promotes recruitment of ALD-DNA to endosomes. The sequence is that of High mobility group protein B1 (HMGB1) from Cricetulus griseus (Chinese hamster).